A 313-amino-acid chain; its full sequence is Formimidoylglutamase (313 aa).

Residues H130, D155, H157, D159, D241, and D243 each contribute to the Mn(2+) site.

Belongs to the arginase family. Requires Mn(2+) as cofactor.

The enzyme catalyses N-formimidoyl-L-glutamate + H2O = formamide + L-glutamate. It participates in amino-acid degradation; L-histidine degradation into L-glutamate; L-glutamate from N-formimidoyl-L-glutamate (hydrolase route): step 1/1. Its function is as follows. Catalyzes the conversion of N-formimidoyl-L-glutamate to L-glutamate and formamide. The protein is Formimidoylglutamase of Salmonella paratyphi A (strain ATCC 9150 / SARB42).